Consider the following 229-residue polypeptide: Aldehyde oxidoreductase iron-sulfur-binding subunit PaoA (229 aa).

The interval 1–21 is disordered; it reads MSNQGEYPEDNRVGKHEPHDL. A signal peptide (tat-type signal) is located at residues 1–53; sequence MSNQGEYPEDNRVGKHEPHDLSLTRRDLIKVSAATAAAAVVYPHSTLAASVPA. The segment covering 9 to 21 has biased composition (basic and acidic residues); it reads EDNRVGKHEPHDL. Residues 61-137 enclose the 2Fe-2S ferredoxin-type domain; sequence MPLTLKVNGK…GAEITTIEGL (77 aa). Positions 99, 104, 105, 107, 119, 158, 161, 208, and 210 each coordinate [2Fe-2S] cluster.

In terms of assembly, heterotrimer composed of PaoA, PaoB and PaoC. [2Fe-2S] cluster serves as cofactor. In terms of processing, exported by the Tat system. The position of the signal peptide cleavage has not been experimentally proven.

The protein localises to the periplasm. The enzyme catalyses an aldehyde + A + H2O = a carboxylate + AH2 + H(+). In terms of biological role, oxidizes aldehydes to the corresponding carboxylic acids with a preference for aromatic aldehydes. It might play a role in the detoxification of aldehydes to avoid cell damage. This is Aldehyde oxidoreductase iron-sulfur-binding subunit PaoA from Escherichia coli O157:H7.